We begin with the raw amino-acid sequence, 355 residues long: Peptide chain release factor 1 (355 aa).

Position 231 is an N5-methylglutamine (Q231). Positions 283–292 (IAKETSERKS) are enriched in basic and acidic residues. Residues 283–303 (IAKETSERKSQVGTGDRSGRI) form a disordered region.

It belongs to the prokaryotic/mitochondrial release factor family. Post-translationally, methylated by PrmC. Methylation increases the termination efficiency of RF1.

Its subcellular location is the cytoplasm. Functionally, peptide chain release factor 1 directs the termination of translation in response to the peptide chain termination codons UAG and UAA. This chain is Peptide chain release factor 1, found in Campylobacter curvus (strain 525.92).